The following is a 118-amino-acid chain: Fluoride-specific ion channel FluC 2 (118 aa).

4 helical membrane passes run 1–21 (MIEA…RFAI), 33–53 (FPIA…YIIG), 55–75 (GVTT…FTTF), and 93–113 (TFLL…FLGM). The Na(+) site is built by glycine 70 and threonine 73.

The protein belongs to the fluoride channel Fluc/FEX (TC 1.A.43) family.

It is found in the cell membrane. The catalysed reaction is fluoride(in) = fluoride(out). Na(+) is not transported, but it plays an essential structural role and its presence is essential for fluoride channel function. In terms of biological role, fluoride-specific ion channel. Important for reducing fluoride concentration in the cell, thus reducing its toxicity. In Bacillus thuringiensis subsp. konkukian (strain 97-27), this protein is Fluoride-specific ion channel FluC 2.